A 357-amino-acid polypeptide reads, in one-letter code: Protein BMRF2 (357 aa).

The Virion surface segment spans residues 1–11; the sequence is MFSCKQHLSLG. Positions 12–32 form a transmembrane segment; it reads ACVFCLGLLASTPFIWCFVFA. Residues 33 to 46 are Intravirion-facing; that stretch reads NLLSLEIFSPWQTH. Positions 47-67 form a transmembrane segment; that stretch reads VYRLGFPTACLMAVLWTLVPA. At 68–70 the chain is on the virion surface side; that stretch reads KHA. Residues 71–91 are membrane-embedded; it reads VRAVTPAIMLNIASALIFFSL. The Intravirion segment spans residues 92–98; sequence RVYSTST. At 99–121 the chain is embedded in the membrane; the sequence is WVSAPCLFLANLPLLCLWPRLAI. Topologically, residues 122-133 are virion surface; the sequence is EIVYICPAIHQR. A membrane pass occupies residues 134 to 154; the sequence is FFELGLLLACTIFALSVVSRA. Residues 155–158 lie on the Intravirion side of the membrane; the sequence is LEVS. A transmembrane span lies at residues 159–179; the sequence is AVFMSPFFIFLALGSGSLAGA. Topologically, residues 180–217 are virion surface; sequence RRNQIYTSGLERRRSIFCARGDHSVASLKETLHKCPWD. Residues 199–201 carry the Integrin binding site motif; it reads RGD. Over 218-238 the chain traverses the membrane; sequence LLAISALTVLVVCVMIVLHVH. The Intravirion segment spans residues 239-240; the sequence is AE. Over 241-261 the chain traverses the membrane; it reads VFFGLSRYLPLFLCGAMASGG. At 262 to 267 the chain is on the virion surface side; it reads LYLGHS. Residues 268-288 are membrane-embedded; the sequence is SIIACVMATLCTLSSVVVYFL. The Intravirion segment spans residues 289–298; it reads HETLGPLGKT. Residues 299-319 are membrane-embedded; it reads VLFISIFVYYFSGVAALSAAM. Residues 320-335 lie on the Virion surface side of the membrane; it reads RYKLKKFVNGPLVHLR. The chain crosses the lipid bilayer at residues 336-356; the sequence is VVYMCCFVFTFCEYLLVTFIK. Residue serine 357 is a topological domain, intravirion.

Belongs to the herpesviridae BMRF2 family. In terms of assembly, interacts with BDLF2. Interacts with host beta1 integrin family. In terms of processing, extensively glycosylated by O-linked oligosaccharides.

Its subcellular location is the virion membrane. It localises to the host cell membrane. In terms of biological role, facilitates virus attachment to oral epithelial cells by binding to host beta1 integrin family. Participates in rearrangement of cellular actin to increase intercellular contacts by binding BDLF2 and thereby promote virus cell-to-cell spreading. In Homo sapiens (Human), this protein is Protein BMRF2.